The following is a 150-amino-acid chain: Transcriptional repressor NrdR (150 aa).

The segment at Cys-3–Cys-34 is a zinc-finger region. The 91-residue stretch at Val-49 to Thr-139 folds into the ATP-cone domain.

It belongs to the NrdR family. It depends on Zn(2+) as a cofactor.

Negatively regulates transcription of bacterial ribonucleotide reductase nrd genes and operons by binding to NrdR-boxes. This chain is Transcriptional repressor NrdR, found in Clostridium botulinum (strain Eklund 17B / Type B).